We begin with the raw amino-acid sequence, 82 residues long: Large ribosomal subunit protein bL31B (82 aa).

It belongs to the bacterial ribosomal protein bL31 family. Type B subfamily. In terms of assembly, part of the 50S ribosomal subunit after the end of exponential growth.

While neither of the L31 paralogs is essential, this protein does not seem to function as the main L31 protein. Has a higher affinity for 70S ribosomes than the zinc-containing L31 paralog; is able to displace it to varying extents, even under zinc-replete conditions. The polypeptide is Large ribosomal subunit protein bL31B (rpmE2) (Bacillus subtilis (strain 168)).